A 962-amino-acid chain; its full sequence is Translation initiation factor IF-2 (962 aa).

The tract at residues 99–366 (VKAAQTQAAP…KKGKKLKLEP (268 aa)) is disordered. The segment covering 117-141 (DAAKARAEAAARAEARAKAEAEAAK) has biased composition (basic and acidic residues). Low complexity predominate over residues 145-155 (AKAGNKAKPAA). Over residues 173-216 (KPAEESKAEKAQADKMPSEKPAEPKEKAAKPKHERNGKGKDAKK) the composition is skewed to basic and acidic residues. Residues 219–234 (KPAAPAVPQPVVSAEE) show a composition bias toward low complexity. A compositionally biased stretch (basic and acidic residues) spans 235-269 (QAQRDEEARRAAALRAHQEALLKEKQERQARREAM). Residues 270–283 (KQQAEQQAKAAQEA) are compositionally biased toward low complexity. 2 stretches are compositionally biased toward basic and acidic residues: residues 314 to 327 (AKKEDRRNRDDEGQ) and 338 to 354 (GGRDRNNARNGDDERVR). In terms of domain architecture, tr-type G spans 462–631 (PRPPVVTVMG…LLEAEVLELT (170 aa)). The interval 471–478 (GHVDHGKT) is G1. 471 to 478 (GHVDHGKT) serves as a coordination point for GTP. Residues 496–500 (GITQH) are G2. Positions 517-520 (DTPG) are G3. GTP is bound by residues 517 to 521 (DTPGH) and 571 to 574 (NKID). The G4 stretch occupies residues 571-574 (NKID). The segment at 607-609 (SAK) is G5.

Belongs to the TRAFAC class translation factor GTPase superfamily. Classic translation factor GTPase family. IF-2 subfamily.

It localises to the cytoplasm. Functionally, one of the essential components for the initiation of protein synthesis. Protects formylmethionyl-tRNA from spontaneous hydrolysis and promotes its binding to the 30S ribosomal subunits. Also involved in the hydrolysis of GTP during the formation of the 70S ribosomal complex. The sequence is that of Translation initiation factor IF-2 from Neisseria meningitidis serogroup B (strain ATCC BAA-335 / MC58).